Reading from the N-terminus, the 271-residue chain is Digeranylgeranylglyceryl phosphate synthase (271 aa).

8 helical membrane-spanning segments follow: residues 11 to 31 (INCA…GARL), 33 to 53 (VGAV…NAIN), 88 to 108 (FAVG…IAAL), 125 to 145 (LIGN…GAAV), 149 to 169 (PAPA…REIL), 201 to 221 (VFAI…VVGW), 224 to 244 (LVLA…AVAG), and 251 to 271 (AQRV…ASLL).

The protein belongs to the UbiA prenyltransferase family. DGGGP synthase subfamily. It depends on Mg(2+) as a cofactor.

It is found in the cell membrane. The catalysed reaction is sn-3-O-(geranylgeranyl)glycerol 1-phosphate + (2E,6E,10E)-geranylgeranyl diphosphate = 2,3-bis-O-(geranylgeranyl)-sn-glycerol 1-phosphate + diphosphate. The protein operates within membrane lipid metabolism; glycerophospholipid metabolism. In terms of biological role, prenyltransferase that catalyzes the transfer of the geranylgeranyl moiety of geranylgeranyl diphosphate (GGPP) to the C2 hydroxyl of (S)-3-O-geranylgeranylglyceryl phosphate (GGGP). This reaction is the second ether-bond-formation step in the biosynthesis of archaeal membrane lipids. The polypeptide is Digeranylgeranylglyceryl phosphate synthase (Methanopyrus kandleri (strain AV19 / DSM 6324 / JCM 9639 / NBRC 100938)).